Here is a 195-residue protein sequence, read N- to C-terminus: Calcineurin B homologous protein 1 (195 aa).

Glycine 2 carries the N-myristoyl glycine lipid modification. Residues 2–6 (GSRAS) carry the Necessary for association with microtubule and interaction with GAPDH motif. 4 EF-hand domains span residues 26–61 (SQIT…AINP), 66–101 (IINA…KSKD), 110–145 (SRSN…MVGV), and 151–186 (QLGS…VDVE). Residues aspartate 123, aspartate 125, aspartate 127, lysine 129, and glutamate 134 each contribute to the Ca(2+) site. The Nuclear export signal 1 signature appears at 138–147 (VLRMMVGVNI). The Ca(2+) site is built by aspartate 164, aspartate 166, aspartate 168, and glutamate 175. The Nuclear export signal 2 motif lies at 176–185 (FVKVLEKVDV).

Belongs to the calcineurin regulatory subunit family. CHP subfamily. Monomer. Interacts with STK17B; the interaction occurs in a calcium-independent manner and induces the translocation of CHP1 from the Golgi to the nucleus. Interacts with GAPDH; the interaction is direct, occurs in a N-myristoylation-dependent manner and facilitates the ability of CHP1 to bind microtubules. Interacts with KIF1B (via the C-terminal end of the kinesin-motor domain); the interaction occurs in a calcium-dependent manner. Associates (via C-terminal domain) with microtubules; the association occurs with polymerized microtubules during the cell cycle in a myristoylation- and calcium-independent manner and is enhanced by GAPDH. Interacts with PPP3CA. Interacts with SLC9A1/NHE1 (via the cytoplasmic C-terminal domain); the interaction occurs at the plasma membrane in a calcium-dependent manner and at a domain that is critical for growth factor stimulation of the exchanger. Interacts with SLC9A3; increases SLC9A3 trafficking and activity at the plasma membrane. Phosphorylated; decreased phosphorylation is associated with an increase in SLC9A1/NHE1 Na(+)/H(+) exchange activity. Phosphorylation occurs in serum-dependent manner. The phosphorylation state may regulate the binding to SLC9A1/NHE1. Post-translationally, both N-myristoylation and calcium-mediated conformational changes are essential for its function in exocytic traffic. N-myristoylation is required for its association with microtubules and interaction with GAPDH, but not for the constitutive association to membranes.

It is found in the nucleus. It localises to the cytoplasm. The protein localises to the cytoskeleton. The protein resides in the endomembrane system. Its subcellular location is the endoplasmic reticulum-Golgi intermediate compartment. It is found in the endoplasmic reticulum. It localises to the cell membrane. The protein localises to the membrane. Functionally, calcium-binding protein involved in different processes such as regulation of vesicular trafficking, plasma membrane Na(+)/H(+) exchanger and gene transcription. Involved in the constitutive exocytic membrane traffic. Mediates the association between microtubules and membrane-bound organelles of the endoplasmic reticulum and Golgi apparatus and is also required for the targeting and fusion of transcytotic vesicles (TCV) with the plasma membrane. Functions as an integral cofactor in cell pH regulation by controlling plasma membrane-type Na(+)/H(+) exchange activity. Affects the pH sensitivity of SLC9A1/NHE1 by increasing its sensitivity at acidic pH. Required for the stabilization and localization of SLC9A1/NHE1 at the plasma membrane. Inhibits serum- and GTPase-stimulated Na(+)/H(+) exchange. Plays a role as an inhibitor of ribosomal RNA transcription by repressing the nucleolar UBF1 transcriptional activity. May sequester UBF1 in the nucleoplasm and limit its translocation to the nucleolus. Associates to the ribosomal gene promoter. Acts as a negative regulator of the calcineurin/NFAT signaling pathway. Inhibits NFAT nuclear translocation and transcriptional activity by suppressing the calcium-dependent calcineurin phosphatase activity. Also negatively regulates the kinase activity of the apoptosis-induced kinase STK17B. Inhibits both STK17B auto- and substrate-phosphorylations in a calcium-dependent manner. In Bos taurus (Bovine), this protein is Calcineurin B homologous protein 1 (CHP1).